The chain runs to 404 residues: Aspergillopepsin-1 (404 aa).

Residues 1–20 (MVILSKVAAVAVGLSTVASA) form the signal peptide. Positions 21-77 (LPTGPSHSPHARRGFTINQITRQTARVGPKTASFPAIYSRALAKYGGTVPAHLKSAV) are cleaved as a propeptide — activation peptide. Residues 95–401 (YLTPVNIGGT…DSQGPRLGFA (307 aa)) form the Peptidase A1 domain. Residue aspartate 111 is part of the active site. The N-linked (GlcNAc...) asparagine glycan is linked to asparagine 140. Aspartate 293 is an active-site residue. A disulfide bridge links cysteine 329 with cysteine 364.

Belongs to the peptidase A1 family. In terms of assembly, monomer.

The protein resides in the secreted. It carries out the reaction Hydrolysis of proteins with broad specificity. Generally favors hydrophobic residues in P1 and P1', but also accepts Lys in P1, which leads to activation of trypsinogen. Does not clot milk.. In terms of biological role, secreted aspartic endopeptidase that allows assimilation of proteinaceous substrates. The scissile peptide bond is attacked by a nucleophilic water molecule activated by two aspartic residues in the active site. Shows a broad primary substrate specificity. Favors hydrophobic residues at the P1 and P1' positions, but also accepts a lysine residue in the P1 position, leading to the activation of trypsinogen and chymotrypsinogen A. In Aspergillus flavus (strain ATCC 200026 / FGSC A1120 / IAM 13836 / NRRL 3357 / JCM 12722 / SRRC 167), this protein is Aspergillopepsin-1 (pepA).